A 160-amino-acid chain; its full sequence is Crossover junction endodeoxyribonuclease RuvC (160 aa).

Residues Asp9, Glu68, and Asp141 contribute to the active site. 3 residues coordinate Mg(2+): Asp9, Glu68, and Asp141.

It belongs to the RuvC family. Homodimer which binds Holliday junction (HJ) DNA. The HJ becomes 2-fold symmetrical on binding to RuvC with unstacked arms; it has a different conformation from HJ DNA in complex with RuvA. In the full resolvosome a probable DNA-RuvA(4)-RuvB(12)-RuvC(2) complex forms which resolves the HJ. The cofactor is Mg(2+).

The protein localises to the cytoplasm. The catalysed reaction is Endonucleolytic cleavage at a junction such as a reciprocal single-stranded crossover between two homologous DNA duplexes (Holliday junction).. Its function is as follows. The RuvA-RuvB-RuvC complex processes Holliday junction (HJ) DNA during genetic recombination and DNA repair. Endonuclease that resolves HJ intermediates. Cleaves cruciform DNA by making single-stranded nicks across the HJ at symmetrical positions within the homologous arms, yielding a 5'-phosphate and a 3'-hydroxyl group; requires a central core of homology in the junction. The consensus cleavage sequence is 5'-(A/T)TT(C/G)-3'. Cleavage occurs on the 3'-side of the TT dinucleotide at the point of strand exchange. HJ branch migration catalyzed by RuvA-RuvB allows RuvC to scan DNA until it finds its consensus sequence, where it cleaves and resolves the cruciform DNA. The protein is Crossover junction endodeoxyribonuclease RuvC of Campylobacter jejuni subsp. jejuni serotype O:2 (strain ATCC 700819 / NCTC 11168).